A 113-amino-acid chain; its full sequence is Large ribosomal subunit protein bL17 (113 aa).

It belongs to the bacterial ribosomal protein bL17 family. In terms of assembly, part of the 50S ribosomal subunit. Contacts protein L32.

This chain is Large ribosomal subunit protein bL17, found in Alkaliphilus metalliredigens (strain QYMF).